Here is a 1165-residue protein sequence, read N- to C-terminus: DNA-directed RNA polymerase subunit beta (1165 aa).

Belongs to the RNA polymerase beta chain family. As to quaternary structure, the RNAP catalytic core consists of 2 alpha, 1 beta, 1 beta' and 1 omega subunit. When a sigma factor is associated with the core the holoenzyme is formed, which can initiate transcription.

The catalysed reaction is RNA(n) + a ribonucleoside 5'-triphosphate = RNA(n+1) + diphosphate. Functionally, DNA-dependent RNA polymerase catalyzes the transcription of DNA into RNA using the four ribonucleoside triphosphates as substrates. This is DNA-directed RNA polymerase subunit beta from Corynebacterium glutamicum (strain R).